Here is a 247-residue protein sequence, read N- to C-terminus: tRNA uridine(34) hydroxylase (247 aa).

Residues 123 to 217 (ITKQDVIVDT…YLEDTQNKNN (95 aa)) form the Rhodanese domain. Cys-177 (cysteine persulfide intermediate) is an active-site residue.

It belongs to the TrhO family.

The catalysed reaction is uridine(34) in tRNA + AH2 + O2 = 5-hydroxyuridine(34) in tRNA + A + H2O. Functionally, catalyzes oxygen-dependent 5-hydroxyuridine (ho5U) modification at position 34 in tRNAs. The sequence is that of tRNA uridine(34) hydroxylase from Rickettsia bellii (strain RML369-C).